The primary structure comprises 748 residues: 5-methyltetrahydropteroyltriglutamate--homocysteine methyltransferase (748 aa).

5-methyltetrahydropteroyltri-L-glutamate is bound at residue lysine 111. L-homocysteine-binding positions include 428–430 (IGS) and glutamate 478. Residues 428-430 (IGS) and glutamate 478 each bind L-methionine. 5-methyltetrahydropteroyltri-L-glutamate contacts are provided by residues 509 to 510 (RC) and tryptophan 555. Aspartate 593 lines the L-homocysteine pocket. L-methionine is bound at residue aspartate 593. Position 599 (glutamate 599) interacts with 5-methyltetrahydropteroyltri-L-glutamate. The Zn(2+) site is built by histidine 635, cysteine 637, and glutamate 659. The Proton donor role is filled by histidine 687. Residue cysteine 719 participates in Zn(2+) binding.

It belongs to the vitamin-B12 independent methionine synthase family. It depends on Zn(2+) as a cofactor.

The enzyme catalyses 5-methyltetrahydropteroyltri-L-glutamate + L-homocysteine = tetrahydropteroyltri-L-glutamate + L-methionine. It participates in amino-acid biosynthesis; L-methionine biosynthesis via de novo pathway; L-methionine from L-homocysteine (MetE route): step 1/1. Catalyzes the transfer of a methyl group from 5-methyltetrahydrofolate to homocysteine resulting in methionine formation. The sequence is that of 5-methyltetrahydropteroyltriglutamate--homocysteine methyltransferase from Herpetosiphon aurantiacus (strain ATCC 23779 / DSM 785 / 114-95).